The primary structure comprises 86 residues: Exodeoxyribonuclease 7 small subunit (86 aa).

Positions 1–26 (MQDELFETEKIPPKNTKNTKNAPKKS) are disordered.

This sequence belongs to the XseB family. In terms of assembly, heterooligomer composed of large and small subunits.

It is found in the cytoplasm. The enzyme catalyses Exonucleolytic cleavage in either 5'- to 3'- or 3'- to 5'-direction to yield nucleoside 5'-phosphates.. Bidirectionally degrades single-stranded DNA into large acid-insoluble oligonucleotides, which are then degraded further into small acid-soluble oligonucleotides. The chain is Exodeoxyribonuclease 7 small subunit from Helicobacter pylori (strain ATCC 700392 / 26695) (Campylobacter pylori).